A 288-amino-acid polypeptide reads, in one-letter code: Homoserine kinase (288 aa).

79 to 89 (PPARGLGSSSA) lines the ATP pocket.

The protein belongs to the GHMP kinase family. Homoserine kinase subfamily.

Its subcellular location is the cytoplasm. The catalysed reaction is L-homoserine + ATP = O-phospho-L-homoserine + ADP + H(+). It participates in amino-acid biosynthesis; L-threonine biosynthesis; L-threonine from L-aspartate: step 4/5. Functionally, catalyzes the ATP-dependent phosphorylation of L-homoserine to L-homoserine phosphate. This is Homoserine kinase from Listeria welshimeri serovar 6b (strain ATCC 35897 / DSM 20650 / CCUG 15529 / CIP 8149 / NCTC 11857 / SLCC 5334 / V8).